The following is a 394-amino-acid chain: MSNKKNEDIEMRAVEGANDFGGEKDPFLGRNSPVLRPRGREPTASAYFGKLDNSPGASIIAYCLSSISMTVVNKYVVSGESWNLNFFYLGVQSLVCTIAILLSRQTGLIKNLAPFDSNKAKRWFPVSLLLVSMIYTGANALQYLSVPVYTIFKNLTIIVIAYGEVLWFGGSVTPLMLLSFGLMVLSSVVAAWADIQAAIDGVGHSAETSAALATLNAGYAWMGLNVVCTSSYLLGMRKVIKKMNFKDYDSMFYNNLLTIPVLVVCSLLVEDWSSENLAKNFPIETRNKLMVGMIYSGLAAIFISYCSAWCIRVTSSTTYSMVGALNKLPIAISGLIFFDAPITFGSITAIAVGFVSGLVFAWAKVRQKAQEAGLLPTTKPTMSASAQSNRDANS.

The Cytoplasmic portion of the chain corresponds to 1–56 (MSNKKNEDIEMRAVEGANDFGGEKDPFLGRNSPVLRPRGREPTASAYFGKLDNSPG). Residues 57–77 (ASIIAYCLSSISMTVVNKYVV) form a helical membrane-spanning segment. Residues 78-81 (SGES) lie on the Lumenal side of the membrane. The helical transmembrane segment at 82 to 102 (WNLNFFYLGVQSLVCTIAILL) threads the bilayer. The Cytoplasmic segment spans residues 103 to 122 (SRQTGLIKNLAPFDSNKAKR). A helical transmembrane segment spans residues 123–145 (WFPVSLLLVSMIYTGANALQYLS). At 146 to 150 (VPVYT) the chain is on the lumenal side. Residues 151-168 (IFKNLTIIVIAYGEVLWF) traverse the membrane as a helical segment. Topologically, residues 169-174 (GGSVTP) are cytoplasmic. Residues 175 to 199 (LMLLSFGLMVLSSVVAAWADIQAAI) traverse the membrane as a helical segment. At 200 to 207 (DGVGHSAE) the chain is on the lumenal side. A helical membrane pass occupies residues 208–228 (TSAALATLNAGYAWMGLNVVC). At 229–249 (TSSYLLGMRKVIKKMNFKDYD) the chain is on the cytoplasmic side. A helical membrane pass occupies residues 250 to 270 (SMFYNNLLTIPVLVVCSLLVE). Residues 271 to 288 (DWSSENLAKNFPIETRNK) lie on the Lumenal side of the membrane. A helical membrane pass occupies residues 289–309 (LMVGMIYSGLAAIFISYCSAW). Residues 310-317 (CIRVTSST) are Cytoplasmic-facing. Residues 318 to 338 (TYSMVGALNKLPIAISGLIFF) form a helical membrane-spanning segment. Over 339-341 (DAP) the chain is Lumenal. Residues 342–362 (ITFGSITAIAVGFVSGLVFAW) form a helical membrane-spanning segment. Residues 363 to 394 (AKVRQKAQEAGLLPTTKPTMSASAQSNRDANS) lie on the Cytoplasmic side of the membrane.

It belongs to the TPT transporter family. SLC35D subfamily. Homooligomer.

The protein resides in the golgi apparatus membrane. It localises to the cytoplasmic vesicle membrane. It is found in the endoplasmic reticulum membrane. In terms of biological role, involved in the import of GDP-mannose from the cytoplasm into the Golgi lumen. The protein is GDP-mannose transporter (VRG4) of Chaetomium globosum (strain ATCC 6205 / CBS 148.51 / DSM 1962 / NBRC 6347 / NRRL 1970) (Soil fungus).